Consider the following 85-residue polypeptide: Large ribosomal subunit protein bL27 (85 aa).

Positions 1 to 20 (MATKKAGGSTKNGRDSNPKM) are disordered.

This sequence belongs to the bacterial ribosomal protein bL27 family.

In Acinetobacter baumannii (strain AB307-0294), this protein is Large ribosomal subunit protein bL27.